Consider the following 517-residue polypeptide: Ammonium transporter 3 (517 aa).

The Extracellular portion of the chain corresponds to Met-1–Asp-32. A helical membrane pass occupies residues Ile-33–Tyr-53. Residues Tyr-54–Gln-69 are Cytoplasmic-facing. Residues Ser-70 to Cys-90 form a helical membrane-spanning segment. Over Ser-91–Thr-118 the chain is Extracellular. Residues Ile-119–Phe-139 form a helical membrane-spanning segment. The Cytoplasmic segment spans residues Ala-140 to Arg-148. A helical membrane pass occupies residues Leu-149 to Tyr-169. At Trp-170–Thr-180 the chain is on the extracellular side. The chain crosses the membrane as a helical span at residues Leu-181–Leu-201. Residues Ala-202–Met-272 lie on the Cytoplasmic side of the membrane. Residues Val-273–Leu-293 form a helical membrane-spanning segment. The Extracellular segment spans residues Thr-294–Thr-299. The chain crosses the membrane as a helical span at residues Ala-300–Ile-320. At Asp-321–Lys-327 the chain is on the cytoplasmic side. A helical transmembrane segment spans residues Phe-328–Cys-348. A topological domain (extracellular) is located at residue Gly-349. The helical transmembrane segment at Phe-350–Leu-370 threads the bilayer. Residues His-371–Arg-384 lie on the Cytoplasmic side of the membrane. Residues Val-385–His-405 form a helical membrane-spanning segment. The Extracellular portion of the chain corresponds to Pro-406–Gln-432. The helical transmembrane segment at Phe-433–Leu-453 threads the bilayer. Topologically, residues Val-454–Phe-517 are cytoplasmic.

It belongs to the ammonia transporter channel (TC 1.A.11.2) family.

The protein resides in the membrane. Its function is as follows. Transporter for ammonium to use as a nitrogen source. The chain is Ammonium transporter 3 (amt3) from Schizosaccharomyces pombe (strain 972 / ATCC 24843) (Fission yeast).